The primary structure comprises 293 residues: Phosphatidylserine decarboxylase proenzyme (293 aa).

Catalysis depends on charge relay system; for autoendoproteolytic cleavage activity residues Asp88, His144, and Ser247. Residue Ser247 is the Schiff-base intermediate with substrate; via pyruvic acid; for decarboxylase activity of the active site. Position 247 is a pyruvic acid (Ser); by autocatalysis (Ser247).

It belongs to the phosphatidylserine decarboxylase family. PSD-B subfamily. Prokaryotic type I sub-subfamily. In terms of assembly, heterodimer of a large membrane-associated beta subunit and a small pyruvoyl-containing alpha subunit. Pyruvate serves as cofactor. Is synthesized initially as an inactive proenzyme. Formation of the active enzyme involves a self-maturation process in which the active site pyruvoyl group is generated from an internal serine residue via an autocatalytic post-translational modification. Two non-identical subunits are generated from the proenzyme in this reaction, and the pyruvate is formed at the N-terminus of the alpha chain, which is derived from the carboxyl end of the proenzyme. The autoendoproteolytic cleavage occurs by a canonical serine protease mechanism, in which the side chain hydroxyl group of the serine supplies its oxygen atom to form the C-terminus of the beta chain, while the remainder of the serine residue undergoes an oxidative deamination to produce ammonia and the pyruvoyl prosthetic group on the alpha chain. During this reaction, the Ser that is part of the protease active site of the proenzyme becomes the pyruvoyl prosthetic group, which constitutes an essential element of the active site of the mature decarboxylase.

Its subcellular location is the cell membrane. It carries out the reaction a 1,2-diacyl-sn-glycero-3-phospho-L-serine + H(+) = a 1,2-diacyl-sn-glycero-3-phosphoethanolamine + CO2. It functions in the pathway phospholipid metabolism; phosphatidylethanolamine biosynthesis; phosphatidylethanolamine from CDP-diacylglycerol: step 2/2. Functionally, catalyzes the formation of phosphatidylethanolamine (PtdEtn) from phosphatidylserine (PtdSer). This chain is Phosphatidylserine decarboxylase proenzyme, found in Xylella fastidiosa (strain M12).